Reading from the N-terminus, the 504-residue chain is Glycerol kinase (504 aa).

Thr-13 contacts ADP. Positions 13, 14, and 15 each coordinate ATP. Thr-13 provides a ligand contact to sn-glycerol 3-phosphate. Arg-17 contacts ADP. Residues Arg-83, Glu-84, and Tyr-135 each coordinate sn-glycerol 3-phosphate. Arg-83, Glu-84, and Tyr-135 together coordinate glycerol. A Phosphohistidine; by HPr modification is found at His-231. Asp-245 provides a ligand contact to sn-glycerol 3-phosphate. Glycerol-binding residues include Asp-245 and Gln-246. ADP-binding residues include Thr-267 and Gly-310. 4 residues coordinate ATP: Thr-267, Gly-310, Gln-314, and Gly-411. ADP-binding residues include Gly-411 and Asn-415.

This sequence belongs to the FGGY kinase family. As to quaternary structure, homotetramer and homodimer (in equilibrium). The phosphoenolpyruvate-dependent sugar phosphotransferase system (PTS), including enzyme I, and histidine-containing protein (HPr) are required for the phosphorylation, which leads to the activation of the enzyme.

It carries out the reaction glycerol + ATP = sn-glycerol 3-phosphate + ADP + H(+). Its pathway is polyol metabolism; glycerol degradation via glycerol kinase pathway; sn-glycerol 3-phosphate from glycerol: step 1/1. With respect to regulation, activated by phosphorylation and inhibited by fructose 1,6-bisphosphate (FBP). Key enzyme in the regulation of glycerol uptake and metabolism. Catalyzes the phosphorylation of glycerol to yield sn-glycerol 3-phosphate. The polypeptide is Glycerol kinase (Ligilactobacillus salivarius (strain UCC118) (Lactobacillus salivarius)).